The chain runs to 80 residues: Serine protease inhibitor Kazal-type 6 (80 aa).

An N-terminal signal peptide occupies residues 1-23; it reads MKTSGVFLLLSLALFCFFSGVFG. Pyrrolidone carboxylic acid is present on Gln-24. A Kazal-like domain is found at 24–80; sequence QGAQVDCAEFKDPKVYCTRESNPHCGSDGQTYGNKCAFCKAVMKSGGKINLKHRGKC. Intrachain disulfides connect Cys-30–Cys-62, Cys-40–Cys-59, and Cys-48–Cys-80.

In terms of tissue distribution, seminal plasma.

It localises to the secreted. Its function is as follows. Serine protease inhibitor selective for kallikreins. Efficiently inhibits KLK4, KLK5, KLK6, KLK7, KLK12, KLK13 and KLK14. Doesn't inhibit KLK8. Inhibits acrosin, trypsin, and chymotrypsin. In Bos taurus (Bovine), this protein is Serine protease inhibitor Kazal-type 6 (SPINK6).